The chain runs to 201 residues: Cell division protein SepF (201 aa).

Positions 27–38 are enriched in basic and acidic residues; the sequence is VQERTSVQRDSR. The interval 27 to 99 is disordered; the sequence is VQERTSVQRD…PRVQNKDSVR (73 aa). Positions 43–54 are enriched in polar residues; it reads QEASQRSHMTNS. Residues 72 to 81 are compositionally biased toward basic and acidic residues; it reads NRQERQRVQR. The segment covering 83-92 has biased composition (polar residues); it reads NAYQQATPRV.

It belongs to the SepF family. As to quaternary structure, homodimer. Interacts with FtsZ.

The protein resides in the cytoplasm. Its function is as follows. Cell division protein that is part of the divisome complex and is recruited early to the Z-ring. Probably stimulates Z-ring formation, perhaps through the cross-linking of FtsZ protofilaments. Its function overlaps with FtsA. The protein is Cell division protein SepF of Streptococcus agalactiae serotype Ia (strain ATCC 27591 / A909 / CDC SS700).